Reading from the N-terminus, the 201-residue chain is ATP-dependent Clp protease proteolytic subunit (201 aa).

Ser100 acts as the Nucleophile in catalysis. His125 is a catalytic residue.

It belongs to the peptidase S14 family. Component of the chloroplastic Clp protease core complex.

The protein localises to the plastid. It is found in the chloroplast stroma. The catalysed reaction is Hydrolysis of proteins to small peptides in the presence of ATP and magnesium. alpha-casein is the usual test substrate. In the absence of ATP, only oligopeptides shorter than five residues are hydrolyzed (such as succinyl-Leu-Tyr-|-NHMec, and Leu-Tyr-Leu-|-Tyr-Trp, in which cleavage of the -Tyr-|-Leu- and -Tyr-|-Trp bonds also occurs).. Functionally, cleaves peptides in various proteins in a process that requires ATP hydrolysis. Has a chymotrypsin-like activity. Plays a major role in the degradation of misfolded proteins. This chain is ATP-dependent Clp protease proteolytic subunit, found in Ranunculus macranthus (Large buttercup).